The following is a 198-amino-acid chain: Anthranilate synthase component 2 (198 aa).

Residues 1-194 (MILIIDNYDS…VNQVNENKES (194 aa)) enclose the Glutamine amidotransferase type-1 domain. 50–52 (GPG) serves as a coordination point for L-glutamine. Catalysis depends on cysteine 77, which acts as the Nucleophile; for GATase activity. Residues glutamine 81 and 128 to 129 (SI) each bind L-glutamine. Active-site for GATase activity residues include histidine 168 and glutamate 170.

As to quaternary structure, heterotetramer consisting of two non-identical subunits: a beta subunit (TrpG) and a large alpha subunit (TrpE).

The enzyme catalyses chorismate + L-glutamine = anthranilate + pyruvate + L-glutamate + H(+). It functions in the pathway amino-acid biosynthesis; L-tryptophan biosynthesis; L-tryptophan from chorismate: step 1/5. Its function is as follows. Part of a heterotetrameric complex that catalyzes the two-step biosynthesis of anthranilate, an intermediate in the biosynthesis of L-tryptophan. In the first step, the glutamine-binding beta subunit (TrpG) of anthranilate synthase (AS) provides the glutamine amidotransferase activity which generates ammonia as a substrate that, along with chorismate, is used in the second step, catalyzed by the large alpha subunit of AS (TrpE) to produce anthranilate. In the absence of TrpG, TrpE can synthesize anthranilate directly from chorismate and high concentrations of ammonia. This is Anthranilate synthase component 2 (trpG) from Lactococcus lactis subsp. lactis (strain IL1403) (Streptococcus lactis).